The chain runs to 36 residues: TICTGADRPCAACCPCCPGTSCQGPESNGVVYCRNF.

4 disulfide bridges follow: C3-C17, C10-C22, C13-C14, and C16-C33.

It belongs to the neurotoxin 11 (kappa toxin) family. In terms of tissue distribution, expressed by the venom gland.

Its subcellular location is the secreted. Functionally, this excitatory toxin inhibits insect calcium-activated potassium (KCa) channels (Slo-type). This is Lambda-hexatoxin-Hv1a from Hadronyche versuta (Blue mountains funnel-web spider).